The sequence spans 347 residues: MSVMFDPDTAIYPFPPKPTPLSIDEKAYYREKIKRLLKERNAVMVAHYYTDPEIQQLAEETGGCISDSLEMARFGAKHPASTLLVAGVRFMGETAKILSPEKTILMPTLQVECSLDLGCPVEEFNAFCDAHPDRTVVVYANTSAAVKARADWVVTSSIAVELIDHLDSLGEKIIWAPDKHLGRYVQKQTGGDILCWQGACIVHDEFKTQALTRLQEEYPDAAILVHPESPQAIVDMADAVGSTSQLIAAAKALPHQRLIVATDRGIFYKMQQAVPDKELLEAPTAGEGATCRSCAHCPWMAMNGLQAIAEALEQEGSNHEVHVDERLRERALVPLNRMLDFAATLRG.

His47 and Ser68 together coordinate iminosuccinate. Cys113 serves as a coordination point for [4Fe-4S] cluster. Iminosuccinate-binding positions include 139-141 (YAN) and Ser156. Cys200 is a [4Fe-4S] cluster binding site. Iminosuccinate-binding positions include 226 to 228 (HPE) and Thr243. Position 297 (Cys297) interacts with [4Fe-4S] cluster.

Belongs to the quinolinate synthase family. Type 1 subfamily. [4Fe-4S] cluster serves as cofactor.

The protein resides in the cytoplasm. The enzyme catalyses iminosuccinate + dihydroxyacetone phosphate = quinolinate + phosphate + 2 H2O + H(+). Its pathway is cofactor biosynthesis; NAD(+) biosynthesis; quinolinate from iminoaspartate: step 1/1. Its function is as follows. Catalyzes the condensation of iminoaspartate with dihydroxyacetone phosphate to form quinolinate. The chain is Quinolinate synthase from Shigella flexneri serotype 5b (strain 8401).